The sequence spans 448 residues: Nuclear distribution protein PAC1 (448 aa).

Positions 9-41 constitute a LisH domain; that stretch reads QAEELHKSIIAYLAANNFQDSVTAMRTELNLGE. Residues 74–95 form a disordered region; sequence SATPTSLSNRKQDPASWLPAGP. WD repeat units follow at residues 102 to 143, 145 to 185, 189 to 236, 239 to 278, 283 to 343, 345 to 384, and 389 to 444; these read SHRT…RTVK, HTKA…KNIR, GHDH…CLKT, GHSD…PETK, GHEH…IKTL, GHDN…KCVK, and MHEH…TSLR.

This sequence belongs to the WD repeat LIS1/nudF family. In terms of assembly, self-associates. Interacts with NDL1 and dynein.

Its subcellular location is the cytoplasm. It localises to the cytoskeleton. It is found in the spindle pole. Its function is as follows. Positively regulates the activity of the minus-end directed microtubule motor protein dynein. May enhance dynein-mediated microtubule sliding by targeting dynein to the microtubule plus end. Required for nuclear migration during vegetative growth as well as development. Required for retrograde early endosome (EE) transport from the hyphal tip. Required for localization of dynein to the mitotic spindle poles. Recruits additional proteins to the dynein complex at SPBs. This chain is Nuclear distribution protein PAC1, found in Fusarium vanettenii (strain ATCC MYA-4622 / CBS 123669 / FGSC 9596 / NRRL 45880 / 77-13-4) (Fusarium solani subsp. pisi).